The primary structure comprises 116 residues: NADH-ubiquinone oxidoreductase chain 3 (116 aa).

3 consecutive transmembrane segments (helical) span residues 3-23, 56-76, and 85-105; these read LILA…MIAF, FFLV…LLPL, and PTLA…GLIH.

The protein belongs to the complex I subunit 3 family.

It localises to the mitochondrion membrane. The catalysed reaction is a ubiquinone + NADH + 5 H(+)(in) = a ubiquinol + NAD(+) + 4 H(+)(out). In terms of biological role, core subunit of the mitochondrial membrane respiratory chain NADH dehydrogenase (Complex I) that is believed to belong to the minimal assembly required for catalysis. Complex I functions in the transfer of electrons from NADH to the respiratory chain. The immediate electron acceptor for the enzyme is believed to be ubiquinone. This is NADH-ubiquinone oxidoreductase chain 3 (MT-ND3) from Latimeria chalumnae (Coelacanth).